The following is a 197-amino-acid chain: MSTLLEQLIEAFRVLPGVGQKSAQRMAYHVLEREREGGRRLAAALGSAVEKVGHCVQCRDFTESEICTICASSSRDRQQLCVVESPADRLAIEHATGYRGLYFILQGRLSPLDGIGPRELGLDRLSERLAAGEVTEMIIATNATVEGEATAHYLAQLARQHAVRPSRLAQGMPLGGELEYVDRGTLSHAFGTRSEVL.

A C4-type zinc finger spans residues 55 to 70 (CVQCRDFTESEICTIC). The Toprim domain occupies 78-173 (QQLCVVESPA…RPSRLAQGMP (96 aa)).

This sequence belongs to the RecR family.

In terms of biological role, may play a role in DNA repair. It seems to be involved in an RecBC-independent recombinational process of DNA repair. It may act with RecF and RecO. This Xanthomonas axonopodis pv. citri (strain 306) protein is Recombination protein RecR.